Reading from the N-terminus, the 162-residue chain is Dihydrofolate reductase (162 aa).

Positions lysine 3 to glycine 161 constitute a DHFR domain. Residue isoleucine 7–alanine 9 participates in substrate binding. Residues alanine 8–alanine 9 and isoleucine 16–alanine 21 each bind NADP(+). Aspartate 29 provides a ligand contact to substrate. Glycine 45–threonine 48 is a binding site for NADP(+). Substrate is bound at residue arginine 60. Residues isoleucine 65–glutamine 68 and methionine 98–isoleucine 103 each bind NADP(+). Position 117 (threonine 117) interacts with substrate.

It belongs to the dihydrofolate reductase family.

It catalyses the reaction (6S)-5,6,7,8-tetrahydrofolate + NADP(+) = 7,8-dihydrofolate + NADPH + H(+). It functions in the pathway cofactor biosynthesis; tetrahydrofolate biosynthesis; 5,6,7,8-tetrahydrofolate from 7,8-dihydrofolate: step 1/1. Its function is as follows. Key enzyme in folate metabolism. Catalyzes an essential reaction for de novo glycine and purine synthesis, and for DNA precursor synthesis. The protein is Dihydrofolate reductase (folA) of Neisseria gonorrhoeae.